Reading from the N-terminus, the 207-residue chain is Vexin (207 aa).

A disordered region spans residues 65 to 104 (RDTGDRRWLQTGRLQTARPPGAHPTKTPSRPVGISEPKTS).

This sequence belongs to the vexin family.

The protein localises to the cell membrane. It localises to the nucleus. Required for neurogenesis in the neural plate and retina. Strongly cooperates with neural bHLH factors to promote neurogenesis. The polypeptide is Vexin (Mus musculus (Mouse)).